The sequence spans 210 residues: Protein GET1 (210 aa).

Over 1 to 4 the chain is Lumenal; that stretch reads MASL. A helical membrane pass occupies residues 5-24; that stretch reads LIIVFLSHVVTYLINTIGAT. At 25 to 110 the chain is on the cytoplasmic side; sequence TVDNLLWLLY…SFDLTVKSVR (86 aa). Positions 43 to 97 form a coiled coil; sequence RTAVEQRRLKGEVVQLKREMKSTSSQDEFAKWAKLRRRHDKAMEEYEAKNKALGK. The helical transmembrane segment at 111–131 threads the bilayer; it reads FFSTTGLKFFLQFWYSKTPMF. The Lumenal segment spans residues 132–155; the sequence is ELPRGWVPWQVEWVLSFPRAPLGT. A helical membrane pass occupies residues 156-172; that stretch reads VSIQVWSGVCTTVVSLA. Residues 173–210 lie on the Cytoplasmic side of the membrane; that stretch reads GDALGVVIQSLILKMTKRGVARTSEGRPSQPMALKKEL.

The protein belongs to the WRB/GET1 family. As to quaternary structure, interacts with GET3.

It localises to the endoplasmic reticulum membrane. Its function is as follows. Required for the post-translational delivery of tail-anchored (TA) proteins to the endoplasmic reticulum. Acts as a membrane receptor for soluble GET3, which recognizes and selectively binds the transmembrane domain of TA proteins in the cytosol. This is Protein GET1 from Uncinocarpus reesii (strain UAMH 1704).